Consider the following 138-residue polypeptide: MRTLWIMAVLLLGVEGNLLQFRKMIKKMTGKEPILSYATYGCNCGMAGVGQPVDGTDRCCFVHNCCYEKVTSCSPKWDQYIYSWENGNIVCGEKNPCKKQICECDKAAAMCFRDNVKTYKKRNIFYPKSSCTEPTDTC.

The N-terminal stretch at 1 to 16 is a signal peptide; that stretch reads MRTLWIMAVLLLGVEG. 7 disulfide bridges follow: Cys42–Cys131, Cys44–Cys60, Cys59–Cys111, Cys65–Cys138, Cys66–Cys104, Cys73–Cys97, and Cys91–Cys102.

Belongs to the phospholipase A2 family. Group II subfamily. N49 sub-subfamily. Homodimer; non-covalently linked. In terms of tissue distribution, expressed by the venom gland.

Its subcellular location is the secreted. In terms of biological role, snake venom phospholipase A2 (PLA2) that exhibits potent myotoxic activity causing inflammatory cell infiltration, severe myoedema, myonecrosis and myolysis in the gastrocnemius muscles of BALB/c mice. The protein is Basic phospholipase A2 homolog TM-N49 of Protobothrops mucrosquamatus (Taiwan habu).